Reading from the N-terminus, the 515-residue chain is Bifunctional purine biosynthesis protein PurH (515 aa).

The region spanning 1 to 145 (MTKRALISVS…KNHASVTVVV (145 aa)) is the MGS-like domain.

Belongs to the PurH family.

It catalyses the reaction (6R)-10-formyltetrahydrofolate + 5-amino-1-(5-phospho-beta-D-ribosyl)imidazole-4-carboxamide = 5-formamido-1-(5-phospho-D-ribosyl)imidazole-4-carboxamide + (6S)-5,6,7,8-tetrahydrofolate. The catalysed reaction is IMP + H2O = 5-formamido-1-(5-phospho-D-ribosyl)imidazole-4-carboxamide. It functions in the pathway purine metabolism; IMP biosynthesis via de novo pathway; 5-formamido-1-(5-phospho-D-ribosyl)imidazole-4-carboxamide from 5-amino-1-(5-phospho-D-ribosyl)imidazole-4-carboxamide (10-formyl THF route): step 1/1. Its pathway is purine metabolism; IMP biosynthesis via de novo pathway; IMP from 5-formamido-1-(5-phospho-D-ribosyl)imidazole-4-carboxamide: step 1/1. The sequence is that of Bifunctional purine biosynthesis protein PurH from Streptococcus gordonii (strain Challis / ATCC 35105 / BCRC 15272 / CH1 / DL1 / V288).